Consider the following 249-residue polypeptide: 5'-nucleotidase SurE (249 aa).

The a divalent metal cation site is built by D9, D10, S40, and N92.

This sequence belongs to the SurE nucleotidase family. A divalent metal cation serves as cofactor.

Its subcellular location is the cytoplasm. It carries out the reaction a ribonucleoside 5'-phosphate + H2O = a ribonucleoside + phosphate. Functionally, nucleotidase that shows phosphatase activity on nucleoside 5'-monophosphates. The chain is 5'-nucleotidase SurE from Shewanella oneidensis (strain ATCC 700550 / JCM 31522 / CIP 106686 / LMG 19005 / NCIMB 14063 / MR-1).